Consider the following 286-residue polypeptide: Bifunctional protein FolD (286 aa).

NADP(+) contacts are provided by residues 165–167 (GRS) and serine 190.

Belongs to the tetrahydrofolate dehydrogenase/cyclohydrolase family. Homodimer.

It catalyses the reaction (6R)-5,10-methylene-5,6,7,8-tetrahydrofolate + NADP(+) = (6R)-5,10-methenyltetrahydrofolate + NADPH. It carries out the reaction (6R)-5,10-methenyltetrahydrofolate + H2O = (6R)-10-formyltetrahydrofolate + H(+). It participates in one-carbon metabolism; tetrahydrofolate interconversion. Functionally, catalyzes the oxidation of 5,10-methylenetetrahydrofolate to 5,10-methenyltetrahydrofolate and then the hydrolysis of 5,10-methenyltetrahydrofolate to 10-formyltetrahydrofolate. The chain is Bifunctional protein FolD from Staphylococcus epidermidis (strain ATCC 35984 / DSM 28319 / BCRC 17069 / CCUG 31568 / BM 3577 / RP62A).